A 329-amino-acid polypeptide reads, in one-letter code: 4-hydroxythreonine-4-phosphate dehydrogenase (329 aa).

2 residues coordinate substrate: histidine 136 and threonine 137. Positions 166, 211, and 266 each coordinate a divalent metal cation. The substrate site is built by lysine 274, asparagine 283, and arginine 292.

The protein belongs to the PdxA family. As to quaternary structure, homodimer. Zn(2+) is required as a cofactor. The cofactor is Mg(2+). Requires Co(2+) as cofactor.

It is found in the cytoplasm. It catalyses the reaction 4-(phosphooxy)-L-threonine + NAD(+) = 3-amino-2-oxopropyl phosphate + CO2 + NADH. It participates in cofactor biosynthesis; pyridoxine 5'-phosphate biosynthesis; pyridoxine 5'-phosphate from D-erythrose 4-phosphate: step 4/5. Functionally, catalyzes the NAD(P)-dependent oxidation of 4-(phosphooxy)-L-threonine (HTP) into 2-amino-3-oxo-4-(phosphooxy)butyric acid which spontaneously decarboxylates to form 3-amino-2-oxopropyl phosphate (AHAP). This Escherichia fergusonii (strain ATCC 35469 / DSM 13698 / CCUG 18766 / IAM 14443 / JCM 21226 / LMG 7866 / NBRC 102419 / NCTC 12128 / CDC 0568-73) protein is 4-hydroxythreonine-4-phosphate dehydrogenase.